Reading from the N-terminus, the 176-residue chain is Acireductone dioxygenase (176 aa).

The segment at 1–21 (MKAYWYDNKPGDQREPHDSGR) is disordered. Over residues 9–20 (KPGDQREPHDSG) the composition is skewed to basic and acidic residues. Residues His-81, His-83, Glu-87, and His-126 each contribute to the Fe(2+) site. Residues His-81, His-83, Glu-87, and His-126 each coordinate Ni(2+).

This sequence belongs to the acireductone dioxygenase (ARD) family. Fe(2+) is required as a cofactor. The cofactor is Ni(2+).

The protein resides in the cytoplasm. It localises to the nucleus. The catalysed reaction is 1,2-dihydroxy-5-(methylsulfanyl)pent-1-en-3-one + O2 = 4-methylsulfanyl-2-oxobutanoate + formate + 2 H(+). It carries out the reaction 1,2-dihydroxy-5-(methylsulfanyl)pent-1-en-3-one + O2 = 3-(methylsulfanyl)propanoate + CO + formate + 2 H(+). It participates in amino-acid biosynthesis; L-methionine biosynthesis via salvage pathway; L-methionine from S-methyl-5-thio-alpha-D-ribose 1-phosphate: step 5/6. Functionally, catalyzes 2 different reactions between oxygen and the acireductone 1,2-dihydroxy-3-keto-5-methylthiopentene (DHK-MTPene) depending upon the metal bound in the active site. Fe-containing acireductone dioxygenase (Fe-ARD) produces formate and 2-keto-4-methylthiobutyrate (KMTB), the alpha-ketoacid precursor of methionine in the methionine recycle pathway. Ni-containing acireductone dioxygenase (Ni-ARD) produces methylthiopropionate, carbon monoxide and formate, and does not lie on the methionine recycle pathway. The sequence is that of Acireductone dioxygenase (adi1) from Aspergillus fumigatus (strain ATCC MYA-4609 / CBS 101355 / FGSC A1100 / Af293) (Neosartorya fumigata).